Consider the following 442-residue polypeptide: Glutamate--tRNA ligase 1 (442 aa).

Residues 9-19 (PSPTGKLHVGN) carry the 'HIGH' region motif. The 'KMSKS' region signature appears at 240–244 (KLSKR). ATP is bound at residue lysine 243.

Belongs to the class-I aminoacyl-tRNA synthetase family. Glutamate--tRNA ligase type 1 subfamily. Monomer.

The protein resides in the cytoplasm. The enzyme catalyses tRNA(Glu) + L-glutamate + ATP = L-glutamyl-tRNA(Glu) + AMP + diphosphate. Its function is as follows. Catalyzes the attachment of glutamate to tRNA(Glu) in a two-step reaction: glutamate is first activated by ATP to form Glu-AMP and then transferred to the acceptor end of tRNA(Glu). The polypeptide is Glutamate--tRNA ligase 1 (Novosphingobium aromaticivorans (strain ATCC 700278 / DSM 12444 / CCUG 56034 / CIP 105152 / NBRC 16084 / F199)).